The following is a 203-amino-acid chain: Thymidylate kinase (203 aa).

An ATP-binding site is contributed by 10–17 (GMDGAGKS).

Belongs to the thymidylate kinase family.

The catalysed reaction is dTMP + ATP = dTDP + ADP. Functionally, phosphorylation of dTMP to form dTDP in both de novo and salvage pathways of dTTP synthesis. The chain is Thymidylate kinase from Methylobacillus flagellatus (strain ATCC 51484 / DSM 6875 / VKM B-1610 / KT).